The following is a 271-amino-acid chain: Phosphatidylglycerol--prolipoprotein diacylglyceryl transferase (271 aa).

7 consecutive transmembrane segments (helical) span residues 25–45, 60–80, 103–123, 134–154, 181–201, 209–229, and 235–255; these read WYGI…KFFV, YFIW…ILIY, FVGI…IATL, WIFL…GRIG, PSQL…VYLA, GELI…CEFY, and GIGF…IMFI. Arg152 contributes to the a 1,2-diacyl-sn-glycero-3-phospho-(1'-sn-glycerol) binding site.

Belongs to the Lgt family.

It localises to the cell inner membrane. It carries out the reaction L-cysteinyl-[prolipoprotein] + a 1,2-diacyl-sn-glycero-3-phospho-(1'-sn-glycerol) = an S-1,2-diacyl-sn-glyceryl-L-cysteinyl-[prolipoprotein] + sn-glycerol 1-phosphate + H(+). The protein operates within protein modification; lipoprotein biosynthesis (diacylglyceryl transfer). Catalyzes the transfer of the diacylglyceryl group from phosphatidylglycerol to the sulfhydryl group of the N-terminal cysteine of a prolipoprotein, the first step in the formation of mature lipoproteins. This is Phosphatidylglycerol--prolipoprotein diacylglyceryl transferase from Campylobacter jejuni subsp. jejuni serotype O:23/36 (strain 81-176).